The primary structure comprises 354 residues: Dihydroorotate dehydrogenase (quinone) (354 aa).

Residues 67-71 and threonine 91 each bind FMN; that span reads AGFDK. Lysine 71 lines the substrate pocket. Residue 116–120 participates in substrate binding; sequence NRMGF. FMN is bound by residues asparagine 144 and asparagine 177. Residue asparagine 177 participates in substrate binding. The Nucleophile role is filled by serine 180. Substrate is bound at residue asparagine 182. Residues lysine 213 and threonine 241 each contribute to the FMN site. 242 to 243 is a binding site for substrate; the sequence is NT. Residues glycine 265, glycine 294, and 315-316 contribute to the FMN site; that span reads YT.

It belongs to the dihydroorotate dehydrogenase family. Type 2 subfamily. Monomer. Requires FMN as cofactor.

It is found in the cell membrane. It catalyses the reaction (S)-dihydroorotate + a quinone = orotate + a quinol. It participates in pyrimidine metabolism; UMP biosynthesis via de novo pathway; orotate from (S)-dihydroorotate (quinone route): step 1/1. Catalyzes the conversion of dihydroorotate to orotate with quinone as electron acceptor. In Mycolicibacterium smegmatis (strain ATCC 700084 / mc(2)155) (Mycobacterium smegmatis), this protein is Dihydroorotate dehydrogenase (quinone).